The primary structure comprises 485 residues: MEEFQGYLELDRYQQHDFLYPLIFREYIYALAHDHGLNRSILLDNVGYDTKYSLLIIKRLISRMYQQNHLIISANDSNQNKFFGYNKNLYSQMMSEGFAVIVEIPFSRRLVSSLEATEIVKSYNLRSIHSIFPFLEDKFPHLNYVSDVLIPYPIHLEILVQTLRYWVKDPSSLHLLRLFLHEYSNWNSLITPKKIIFSKSNPRLFLLLYNSHVCEYESILLFLRNQSSHLRLTSSGIFFERIHFYEKKKDPVEEVFVNDFPAAILWFFKDPFMHYVRYQGKSILSSKDTPLLMNKWKYYLVNLWQCHSYVWSQPGRIYINQLSKHSLDFLGYFSSMRPNLSVVRGQMLENSFIMDNAMKKLDTLVPIIPLIGSLAKVKFCNALGHPISKSTWADSSDFDIIDRFLHICRNLSHYYSGSSRKKSLYRIKYILRLSCVKTLARKHKSTVRTFLKRLGYKIIGRILYGRRTDSFFNLPKSFLYFEEVL.

This sequence belongs to the intron maturase 2 family. MatK subfamily.

Its subcellular location is the plastid. The protein localises to the chloroplast. Usually encoded in the trnK tRNA gene intron. Probably assists in splicing its own and other chloroplast group II introns. The protein is Maturase K of Malus domestica (Apple).